Reading from the N-terminus, the 585-residue chain is ATP-dependent lipid A-core flippase (585 aa).

The next 6 helical transmembrane spans lie at 25 to 45, 63 to 83, 127 to 146, 150 to 170, 250 to 270, and 277 to 297; these read FLAALACMGVASLAEPVFPAI, WLFYPLAIMGIFLVRAIFGFL, IAYDVTGVAGAATNALTSLI, LSIVGLLVWLLWLNWQLTLIT, QSPLVQFFAASGVAIIMGVAL, and QTTVGSFVSFVTAMLMLMAPL. One can recognise an ABC transmembrane type-1 domain in the interval 26–309; it reads LAALACMGVA…VTDVNAPIQR (284 aa). The ABC transporter domain maps to 341-577; it reads VEFDGVTFTY…DGLYARLYRM (237 aa). Position 375–382 (375–382) interacts with ATP; sequence GPSGSGKT.

It belongs to the ABC transporter superfamily. Lipid exporter (TC 3.A.1.106) family. Homodimer.

Its subcellular location is the cell inner membrane. It catalyses the reaction ATP + H2O + lipid A-core oligosaccharideSide 1 = ADP + phosphate + lipid A-core oligosaccharideSide 2.. In terms of biological role, involved in lipopolysaccharide (LPS) biosynthesis. Translocates lipid A-core from the inner to the outer leaflet of the inner membrane. Transmembrane domains (TMD) form a pore in the inner membrane and the ATP-binding domain (NBD) is responsible for energy generation. The chain is ATP-dependent lipid A-core flippase from Dechloromonas aromatica (strain RCB).